We begin with the raw amino-acid sequence, 236 residues long: 2-C-methyl-D-erythritol 4-phosphate cytidylyltransferase (236 aa).

The protein belongs to the IspD/TarI cytidylyltransferase family. IspD subfamily.

The catalysed reaction is 2-C-methyl-D-erythritol 4-phosphate + CTP + H(+) = 4-CDP-2-C-methyl-D-erythritol + diphosphate. Its pathway is isoprenoid biosynthesis; isopentenyl diphosphate biosynthesis via DXP pathway; isopentenyl diphosphate from 1-deoxy-D-xylulose 5-phosphate: step 2/6. In terms of biological role, catalyzes the formation of 4-diphosphocytidyl-2-C-methyl-D-erythritol from CTP and 2-C-methyl-D-erythritol 4-phosphate (MEP). This is 2-C-methyl-D-erythritol 4-phosphate cytidylyltransferase from Pseudomonas savastanoi pv. phaseolicola (strain 1448A / Race 6) (Pseudomonas syringae pv. phaseolicola (strain 1448A / Race 6)).